The following is a 219-amino-acid chain: Orotate phosphoribosyltransferase (219 aa).

Lys-26 is a binding site for 5-phospho-alpha-D-ribose 1-diphosphate. Residue 34–35 participates in orotate binding; that stretch reads FF. 5-phospho-alpha-D-ribose 1-diphosphate contacts are provided by residues 72 to 73, Arg-102, Lys-103, Lys-106, His-108, and 128 to 136; these read YK and DDVITAGTA. Positions 132 and 160 each coordinate orotate.

This sequence belongs to the purine/pyrimidine phosphoribosyltransferase family. PyrE subfamily. In terms of assembly, homodimer.

The enzyme catalyses orotidine 5'-phosphate + diphosphate = orotate + 5-phospho-alpha-D-ribose 1-diphosphate. It functions in the pathway pyrimidine metabolism; UMP biosynthesis via de novo pathway; UMP from orotate: step 1/2. In terms of biological role, catalyzes the transfer of a ribosyl phosphate group from 5-phosphoribose 1-diphosphate to orotate, leading to the formation of orotidine monophosphate (OMP). This is Orotate phosphoribosyltransferase (URA5) from Yarrowia lipolytica (strain CLIB 122 / E 150) (Yeast).